Reading from the N-terminus, the 243-residue chain is Orotidine 5'-phosphate decarboxylase (243 aa).

Substrate is bound by residues Asp-19, Lys-41, 69–78, Thr-124, Arg-185, Gln-194, Gly-214, and Arg-215; that span reads DLKFFDIPAT. The active-site Proton donor is Lys-71.

The protein belongs to the OMP decarboxylase family. Type 1 subfamily. In terms of assembly, homodimer.

The enzyme catalyses orotidine 5'-phosphate + H(+) = UMP + CO2. The protein operates within pyrimidine metabolism; UMP biosynthesis via de novo pathway; UMP from orotate: step 2/2. In terms of biological role, catalyzes the decarboxylation of orotidine 5'-monophosphate (OMP) to uridine 5'-monophosphate (UMP). The sequence is that of Orotidine 5'-phosphate decarboxylase from Xanthomonas campestris pv. campestris (strain B100).